The following is a 324-amino-acid chain: Glyoxylate/hydroxypyruvate reductase B (324 aa).

Catalysis depends on residues Arg237 and Glu266. The active-site Proton donor is His285.

It belongs to the D-isomer specific 2-hydroxyacid dehydrogenase family. GhrB subfamily. As to quaternary structure, homodimer.

The protein resides in the cytoplasm. The catalysed reaction is glycolate + NADP(+) = glyoxylate + NADPH + H(+). It carries out the reaction (R)-glycerate + NAD(+) = 3-hydroxypyruvate + NADH + H(+). It catalyses the reaction (R)-glycerate + NADP(+) = 3-hydroxypyruvate + NADPH + H(+). Functionally, catalyzes the NADPH-dependent reduction of glyoxylate and hydroxypyruvate into glycolate and glycerate, respectively. The sequence is that of Glyoxylate/hydroxypyruvate reductase B from Escherichia coli (strain K12 / MC4100 / BW2952).